The primary structure comprises 604 residues: Elongation factor 4 (604 aa).

Residues D9–A191 form the tr-type G domain. GTP-binding positions include D21–T26 and N138–D141.

Belongs to the TRAFAC class translation factor GTPase superfamily. Classic translation factor GTPase family. LepA subfamily.

The protein resides in the cell inner membrane. The enzyme catalyses GTP + H2O = GDP + phosphate + H(+). In terms of biological role, required for accurate and efficient protein synthesis under certain stress conditions. May act as a fidelity factor of the translation reaction, by catalyzing a one-codon backward translocation of tRNAs on improperly translocated ribosomes. Back-translocation proceeds from a post-translocation (POST) complex to a pre-translocation (PRE) complex, thus giving elongation factor G a second chance to translocate the tRNAs correctly. Binds to ribosomes in a GTP-dependent manner. The protein is Elongation factor 4 of Prosthecochloris aestuarii (strain DSM 271 / SK 413).